The primary structure comprises 248 residues: DNA-directed RNA polymerase subunit Rpo3 (248 aa).

Belongs to the archaeal Rpo3/eukaryotic RPB3 RNA polymerase subunit family. As to quaternary structure, part of the RNA polymerase complex.

The protein resides in the cytoplasm. It carries out the reaction RNA(n) + a ribonucleoside 5'-triphosphate = RNA(n+1) + diphosphate. Its function is as follows. DNA-dependent RNA polymerase (RNAP) catalyzes the transcription of DNA into RNA using the four ribonucleoside triphosphates as substrates. The protein is DNA-directed RNA polymerase subunit Rpo3 of Halobacterium salinarum (strain ATCC 29341 / DSM 671 / R1).